Here is a 428-residue protein sequence, read N- to C-terminus: MSIIEQVGAREILDSRGNPTVEVEVLLDDGSFARAAVPSGASTGEHEAVELRDGGDRYGGKGVEKAVEAVLSEIAPAIIGIDATEQRTVDQALLDADGTPDKSRLGANALLGASLAVARAAAESSGLDLFRYVGGPNAHVLPVPMMNILNGGAHADTGVDVQEFMVAPIGAATFKESLRWGAEVYHALKSVLKEKGLATGLGDEGGFAPDVAGTKEALDLISVAIGKTGLVLGTDVALALDVAATEFYTDGTGYKFEGSNRTAAEMSAFYAELVDAYPIVSIEDPLDEDDWDGWVALTDQIGNKVQLVGDDLFVTNPERLEEGIVKGAANALLVKVNQIGTLTETLDAVDLAHRNGYKTMMSHRSGETEDTTIADLAVAVGSGQIKTGAPARSERVAKYNQLLRIEENLGDAARYAGEVAFPRFAFEG.

Gln-162 lines the (2R)-2-phosphoglycerate pocket. Residue Glu-204 is the Proton donor of the active site. Residues Asp-241, Glu-283, and Asp-310 each contribute to the Mg(2+) site. (2R)-2-phosphoglycerate-binding residues include Lys-335, Arg-364, Ser-365, and Lys-386. The active-site Proton acceptor is the Lys-335.

Belongs to the enolase family. Requires Mg(2+) as cofactor.

Its subcellular location is the cytoplasm. It localises to the secreted. The protein localises to the cell surface. It catalyses the reaction (2R)-2-phosphoglycerate = phosphoenolpyruvate + H2O. It participates in carbohydrate degradation; glycolysis; pyruvate from D-glyceraldehyde 3-phosphate: step 4/5. In terms of biological role, catalyzes the reversible conversion of 2-phosphoglycerate (2-PG) into phosphoenolpyruvate (PEP). It is essential for the degradation of carbohydrates via glycolysis. This chain is Enolase, found in Rhodococcus jostii (strain RHA1).